Here is a 335-residue protein sequence, read N- to C-terminus: UPF0104 membrane protein PH1989 (335 aa).

8 helical membrane-spanning segments follow: residues 4–24 (YLLI…AGIE), 34–54 (DIRF…IWAV), 62–82 (GANI…GIFL), 122–142 (ILDV…ALTI), 148–168 (LIIL…TTVF), 231–251 (LYSF…FLSL), 266–286 (ASIA…TEVV), and 304–324 (VTML…GILV).

The protein belongs to the UPF0104 family.

It localises to the cell membrane. The sequence is that of UPF0104 membrane protein PH1989 from Pyrococcus horikoshii (strain ATCC 700860 / DSM 12428 / JCM 9974 / NBRC 100139 / OT-3).